The primary structure comprises 160 residues: NADH-quinone oxidoreductase subunit I (160 aa).

4Fe-4S ferredoxin-type domains are found at residues R51–A80 and T91–N120. [4Fe-4S] cluster contacts are provided by C60, C63, C66, C70, C100, C103, C106, and C110.

Belongs to the complex I 23 kDa subunit family. NDH-1 is composed of 14 different subunits. Subunits NuoA, H, J, K, L, M, N constitute the membrane sector of the complex. The cofactor is [4Fe-4S] cluster.

The protein localises to the cell inner membrane. It catalyses the reaction a quinone + NADH + 5 H(+)(in) = a quinol + NAD(+) + 4 H(+)(out). Its function is as follows. NDH-1 shuttles electrons from NADH, via FMN and iron-sulfur (Fe-S) centers, to quinones in the respiratory chain. The immediate electron acceptor for the enzyme in this species is believed to be ubiquinone. Couples the redox reaction to proton translocation (for every two electrons transferred, four hydrogen ions are translocated across the cytoplasmic membrane), and thus conserves the redox energy in a proton gradient. The protein is NADH-quinone oxidoreductase subunit I of Neorickettsia sennetsu (strain ATCC VR-367 / Miyayama) (Ehrlichia sennetsu).